A 461-amino-acid polypeptide reads, in one-letter code: Cysteine--tRNA ligase (461 aa).

Residue Cys-28 participates in Zn(2+) binding. The short motif at 30–40 (ITIYDLCHIGH) is the 'HIGH' region element. Residues Cys-209, His-234, and Glu-238 each contribute to the Zn(2+) site. Positions 266-270 (KMSKS) match the 'KMSKS' region motif. An ATP-binding site is contributed by Lys-269.

This sequence belongs to the class-I aminoacyl-tRNA synthetase family. Monomer. The cofactor is Zn(2+).

Its subcellular location is the cytoplasm. The catalysed reaction is tRNA(Cys) + L-cysteine + ATP = L-cysteinyl-tRNA(Cys) + AMP + diphosphate. This is Cysteine--tRNA ligase from Yersinia pestis bv. Antiqua (strain Antiqua).